A 363-amino-acid polypeptide reads, in one-letter code: NAD-dependent epimerase/dehydratase tndE (363 aa).

The chain crosses the membrane as a helical span at residues 10–30 (GLVLITGVNGFLASHLALQLI). Residue tyrosine 176 participates in NADP(+) binding.

This sequence belongs to the NAD(P)-dependent epimerase/dehydratase family. Dihydroflavonol-4-reductase subfamily.

The protein localises to the membrane. The protein operates within secondary metabolite biosynthesis; terpenoid biosynthesis. Functionally, NAD-dependent epimerase/dehydratase; part of the gene cluster that mediates the biosynthesis of talaronoid C, a fusicoccane diterpenoid with an unprecedented tricyclic 5/8/6 ring system. The first step in the pathway is performed by the fusicoccadiene synthase tndC that possesses both prenyl transferase and terpene cyclase activity, converting isopentenyl diphosphate and dimethylallyl diphosphate into geranylgeranyl diphosphate (GGDP) and further converting GGDP into talarodiene, a precursor for talaronoid C. The remaining enzymes from the cluster include the cytochrome P450 monooxygenase tndB, the aldehyde reductase tndE and the alcohol dehydrogenase tndF that are involved in the conversion of talarodiene into talaronoid C. This is NAD-dependent epimerase/dehydratase tndE from Aspergillus flavipes.